The primary structure comprises 306 residues: D-aminoacyl-tRNA deacylase (306 aa).

Belongs to the DtdA deacylase family. In terms of assembly, monomer. It depends on Zn(2+) as a cofactor.

The enzyme catalyses a D-aminoacyl-tRNA + H2O = a tRNA + a D-alpha-amino acid + H(+). It carries out the reaction glycyl-tRNA(Ala) + H2O = tRNA(Ala) + glycine + H(+). Functionally, D-aminoacyl-tRNA deacylase with broad substrate specificity. By recycling D-aminoacyl-tRNA to D-amino acids and free tRNA molecules, this enzyme counteracts the toxicity associated with the formation of D-aminoacyl-tRNA entities in vivo. The sequence is that of D-aminoacyl-tRNA deacylase from Methanosarcina barkeri (strain Fusaro / DSM 804).